Reading from the N-terminus, the 270-residue chain is MISKINFVKMHGLGNDFVIVNKRDLSSSYDLSQLAKNMAERHTGIGCDQFILYEEHNDFYEMIIYNIDGSSAKLCGNATRCLAKLIYLDTGKQDITVMVGNKKLLCNVNDENNISVNVGSVSFNEAWMPSRDKVWEFAERYMIDLKETICVDIGNPHVVIFSKLEPQDQKIVGERLQAKELFADGVNVNFAEVKDNKIYLSVWERGVGLTLACGSGACGSFAAGLKHGFIHSPSTIVFKHGNLTMKEENGNIIMQGAATLVARGEYYCEQ.

Substrate-binding residues include Asn-15, Gln-49, and Asn-66. Cys-75 (proton donor) is an active-site residue. Residues 76–77, Asn-155, Asn-187, and 204–205 each bind substrate; these read GN and ER. Cys-213 serves as the catalytic Proton acceptor. Substrate is bound at residue 214–215; sequence GS.

This sequence belongs to the diaminopimelate epimerase family. As to quaternary structure, homodimer.

The protein localises to the cytoplasm. The enzyme catalyses (2S,6S)-2,6-diaminopimelate = meso-2,6-diaminopimelate. Its pathway is amino-acid biosynthesis; L-lysine biosynthesis via DAP pathway; DL-2,6-diaminopimelate from LL-2,6-diaminopimelate: step 1/1. Catalyzes the stereoinversion of LL-2,6-diaminopimelate (L,L-DAP) to meso-diaminopimelate (meso-DAP), a precursor of L-lysine and an essential component of the bacterial peptidoglycan. The protein is Diaminopimelate epimerase of Rickettsia rickettsii (strain Iowa).